Reading from the N-terminus, the 588-residue chain is Aspartate--tRNA ligase (588 aa).

Glu177 contributes to the L-aspartate binding site. An aspartate region spans residues 201 to 204 (QLFK). Arg223 is a binding site for L-aspartate. ATP contacts are provided by residues 223–225 (RDE) and Gln232. Residue His451 coordinates L-aspartate. An ATP-binding site is contributed by Glu485. An L-aspartate-binding site is contributed by Arg492. 537–540 (GLDR) is a binding site for ATP.

The protein belongs to the class-II aminoacyl-tRNA synthetase family. Type 1 subfamily. In terms of assembly, homodimer.

The protein localises to the cytoplasm. It catalyses the reaction tRNA(Asp) + L-aspartate + ATP = L-aspartyl-tRNA(Asp) + AMP + diphosphate. In terms of biological role, catalyzes the attachment of L-aspartate to tRNA(Asp) in a two-step reaction: L-aspartate is first activated by ATP to form Asp-AMP and then transferred to the acceptor end of tRNA(Asp). This is Aspartate--tRNA ligase from Staphylococcus aureus (strain NCTC 8325 / PS 47).